The chain runs to 568 residues: Malate synthase, glyoxysomal (568 aa).

Positions 1 to 20 are disordered; it reads MGSLGMYSESGLTKKGSSRG. The Proton acceptor role is filled by Arg-183. The active-site Proton donor is Asp-469. The Microbody targeting signal signature appears at 566–568; the sequence is SKL.

The protein belongs to the malate synthase family.

Its subcellular location is the glyoxysome. The catalysed reaction is glyoxylate + acetyl-CoA + H2O = (S)-malate + CoA + H(+). It functions in the pathway carbohydrate metabolism; glyoxylate cycle; (S)-malate from isocitrate: step 2/2. In Cucumis sativus (Cucumber), this protein is Malate synthase, glyoxysomal.